The primary structure comprises 2201 residues: Voltage-dependent T-type calcium channel subunit alpha-1I (2201 aa).

The segment at 1–45 (MADSNLPPSSAAAPAPEPGITEQPGPRSPPPSPPGLEEPLEGTNP) is disordered. Topologically, residues 1–76 (MADSNLPPSS…RNWCIKMVCN (76 aa)) are cytoplasmic. Residues 26 to 36 (PRSPPPSPPGL) show a composition bias toward pro residues. One copy of the I repeat lies at 64–399 (TSPRNWCIKM…LCLVVIATQF (336 aa)). Residues 77–97 (PWFECVSMLVILLNCVTLGMY) traverse the membrane as a helical segment. The Extracellular portion of the chain corresponds to 98-115 (QPCDDMECLSDRCKILQV). Residues 116–137 (FDDFIFIFFAMEMVLKMVALGI) form a helical membrane-spanning segment. Residues 138–146 (FGKKCYLGD) lie on the Cytoplasmic side of the membrane. A helical transmembrane segment spans residues 147–166 (TWNRLDFFIVMAGMVEYSLD). The Extracellular portion of the chain corresponds to 167-171 (LQNIN). Asparagine 171 carries N-linked (GlcNAc...) asparagine glycosylation. Residues 172 to 189 (LSAIRTVRVLRPLKAINR) form a helical membrane-spanning segment. At 190-209 (VPSMRILVNLLLDTLPMLGN) the chain is on the cytoplasmic side. Residues 210-230 (VLLLCFFVFFIFGIIGVQLWA) traverse the membrane as a helical segment. Residues 231-371 (GLLRNRCFLE…YYVMDAHSFY (141 aa)) are Extracellular-facing. N-linked (GlcNAc...) asparagine glycans are attached at residues asparagine 242 and asparagine 309. The chain crosses the membrane as a helical span at residues 372–396 (NFIYFILLIIVGSFFMINLCLVVIA). Residues 397 to 598 (TQFSETKQRE…EKLRGIVDSK (202 aa)) lie on the Cytoplasmic side of the membrane. Disordered stretches follow at residues 463 to 500 (QAMGPGTPAPAKPGPHAKEPSHCKLCPRHSPLDPTPHT) and 513 to 579 (PSSC…AARL). The span at 545 to 554 (SAEAEANGDG) shows a compositional bias: low complexity. An II repeat occupies 584-823 (WRETREKLRG…LLVAILVEGF (240 aa)). The chain crosses the membrane as a helical span at residues 599–619 (YFNRGIMMAILVNTVSMGIEH). The Extracellular segment spans residues 620–632 (HEQPEELTNILEI). Residues 633 to 654 (CNVVFTSMFALEMILKLAAFGL) form a helical membrane-spanning segment. Residues 655–660 (FDYLRN) are Cytoplasmic-facing. Residues 661–679 (PYNIFDSIIVIISIWEIVG) form a helical membrane-spanning segment. At 680–687 (QADGGLSV) the chain is on the extracellular side. A helical transmembrane segment spans residues 688–711 (LRTFRLLRVLKLVRFMPALRRQLV). Residues 712–722 (VLMKTMDNVAT) are Cytoplasmic-facing. Residues 723–743 (FCMLLMLFIFIFSILGMHIFG) form a helical membrane-spanning segment. Topologically, residues 744 to 795 (CKFSLRTDTGDTVPDRKNFDSLLWAIVTVFQILTQEDWNVVLYNGMASTTPW) are extracellular. A helical membrane pass occupies residues 796-820 (ASLYFVALMTFGNYVLFNLLVAILV). Topologically, residues 821 to 1125 (EGFQAEGDAN…NKFRILCQTI (305 aa)) are cytoplasmic. The interval 936 to 969 (WGRSGTWASRRSSWNSLKHKPPSAEHESLLSGEG) is disordered. Over residues 941–951 (TWASRRSSWNS) the composition is skewed to polar residues. Serine 1017 bears the Phosphoserine mark. The III repeat unit spans residues 1116 to 1393 (NKFRILCQTI…MFVGVVVENF (278 aa)). A helical membrane pass occupies residues 1126–1148 (IAHKLFDYVVLAFIFLNCITIAL). Residues 1149-1166 (ERPQIEAGSTERIFLTVS) are Extracellular-facing. The chain crosses the membrane as a helical span at residues 1167-1187 (NYIFTAIFVGEMTLKVVSLGL). Residues 1188 to 1197 (YFGEQAYLRS) are Cytoplasmic-facing. The helical transmembrane segment at 1198–1217 (SWNVLDGFLVFVSIIDIVVS) threads the bilayer. Residues 1218 to 1231 (VASAGGAKILGVLR) lie on the Extracellular side of the membrane. Residues 1232–1253 (VLRLLRTLRPLRVISRAPGLKL) form a helical membrane-spanning segment. Residues 1254-1263 (VVETLISSLK) lie on the Cytoplasmic side of the membrane. Residues 1264-1287 (PIGNIVLICCAFFIIFGILGVQLF) form a helical membrane-spanning segment. The Extracellular segment spans residues 1288–1364 (KGKFYHCLGV…DQQPVTNHNP (77 aa)). Residues asparagine 1301 and asparagine 1304 are each glycosylated (N-linked (GlcNAc...) asparagine). A helical membrane pass occupies residues 1365–1390 (WMLLYFISFLLIVSFFVLNMFVGVVV). Over 1391 to 1445 (ENFHKCRQHQEAEEARRREEKRLRRLEKKRRKAQRLPYYATYCPTRLLIHSMCTS) the chain is Cytoplasmic. The stretch at 1431 to 1692 (TYCPTRLLIH…VVVAVLMKHL (262 aa)) is one IV repeat. Residues 1446–1466 (HYLDIFITFIICLNVVTMSLE) traverse the membrane as a helical segment. At 1467-1480 (HYNQPTSLETALKY) the chain is on the extracellular side. A helical transmembrane segment spans residues 1481-1502 (CNYMFTTVFVLEAVLKLVAFGL). Residues 1503-1509 (RRFFKDR) are Cytoplasmic-facing. A helical transmembrane segment spans residues 1510-1528 (WNQLDLAIVLLSVMGITLE). Residues 1529–1542 (EIEINAALPINPTI) lie on the Extracellular side of the membrane. A helical transmembrane segment spans residues 1543 to 1566 (IRIMRVLRIARVLKLLKMATGMRA). At 1567-1580 (LLDTVVQALPQVGN) the chain is on the cytoplasmic side. The helical transmembrane segment at 1581–1601 (LGLLFMLLFFIYAALGVELFG) threads the bilayer. Residues 1602 to 1664 (KLVCNDENPC…RSCLSSLQFV (63 aa)) lie on the Extracellular side of the membrane. The helical transmembrane segment at 1665–1692 (SPLYFVSFVLTAQFVLINVVVAVLMKHL) threads the bilayer. At 1693 to 1835 (DDSNKEAQED…EVQLAETEAF (143 aa)) the chain is on the cytoplasmic side. Disordered regions lie at residues 1846–1876 (LLGDDLSLEDPTACPPGRKDSKGELDPPEPM), 1916–1938 (LKHDSSQAPPSPFSPDGSSPLLQ), 1992–2045 (SDTS…TRRR), 2057–2105 (RGLR…HSET), and 2126–2201 (LTPA…KRKR). The span at 1992-2007 (SDTSLDASPSSSAGSL) shows a compositional bias: low complexity. 2 stretches are compositionally biased toward polar residues: residues 2008–2019 (QTTLEDSLTLSD) and 2066–2075 (HSSGGSTSPG). The span at 2077-2090 (THHDSMDPSDEEGR) shows a compositional bias: basic and acidic residues.

This sequence belongs to the calcium channel alpha-1 subunit (TC 1.A.1.11) family. CACNA1I subfamily. As to quaternary structure, interacts with CATSPER1 and CATSPER2, leading to suppress T-type calcium channel activity. In terms of processing, in response to raising of intracellular calcium, the T-type channels are activated by CaM-kinase II. In terms of tissue distribution, brain.

The protein localises to the membrane. It carries out the reaction Ca(2+)(in) = Ca(2+)(out). Voltage-sensitive calcium channels (VSCC) mediate the entry of calcium ions into excitable cells and are also involved in a variety of calcium-dependent processes, including muscle contraction, hormone or neurotransmitter release, gene expression, cell motility, cell division and cell death. This channel gives rise to T-type calcium currents. T-type calcium channels belong to the 'low-voltage activated (LVA)' group and are strongly blocked by nickel and mibefradil. A particularity of this type of channels is an opening at quite negative potentials, and a voltage-dependent inactivation. T-type channels serve pacemaking functions in both central neurons and cardiac nodal cells and support calcium signaling in secretory cells and vascular smooth muscle. They may also be involved in the modulation of firing patterns of neurons which is important for information processing as well as in cell growth processes. Gates in voltage ranges similar to, but higher than alpha 1G or alpha 1H. Functionally, voltage-sensitive calcium channels (VSCC) mediate the entry of calcium ions into excitable cells and are also involved in a variety of calcium-dependent processes, including muscle contraction, hormone or neurotransmitter release, gene expression, cell motility, cell division and cell death. This channel gives rise to T-type calcium currents. This is Voltage-dependent T-type calcium channel subunit alpha-1I (Cacna1i) from Rattus norvegicus (Rat).